Here is a 403-residue protein sequence, read N- to C-terminus: MKIRSAKVIVTCPGRNLVTLKIETDEGVYGIGDATLNGREKSVVSYLEDHVIPTLIGKDPQRVEDIWQYLYRGAYWRRGPVGMTAIAAVDVALWDIKAKLAGMPLYQLLGGKSREKVMVYGHATGLDIESCLEEVRKHVELGYKAVRVQCGIPGIPTTYGVSKEAGKPYEPADSALPAEHVWSTEKYLNNVPELFAAVRKEFGEDLHILHDVHHRLTPIQAARLGKEVEKFHLFWLEDCTAVENQSSYELIRKHTTTPLAIGEVFNSLSDCQELIQNQLIDYIRATITHAGGITNIRRIADFASVFHVKTGFHGATDLSPVCMGAALHFDTWVPNFGIQEHMPHTKETDLVFPHAYEFNDGFFTPGDVPGHGVDIDEEIAAKYPYKPAYLPVNRLEDGTLWNW.

Substrate is bound by residues Asn37 and His122. Catalysis depends on Tyr159, which acts as the Proton donor/acceptor. Asp211 lines the Mg(2+) pocket. His213 functions as the Proton donor/acceptor in the catalytic mechanism. 2 residues coordinate Mg(2+): Glu237 and Glu263. Substrate is bound by residues Glu263, Arg284, His313, Asp317, and Glu340.

Belongs to the mandelate racemase/muconate lactonizing enzyme family. GalD subfamily. Requires Mg(2+) as cofactor.

It carries out the reaction D-mannonate = 2-dehydro-3-deoxy-D-gluconate + H2O. In terms of biological role, has low D-mannonate dehydratase activity (in vitro), suggesting that this is not a physiological substrate and that it has no significant role in D-mannonate degradation in vivo. Has no detectable activity with a panel of 70 other acid sugars (in vitro). The protein is D-galactonate dehydratase family member Mmwyl1_0037 of Marinomonas sp. (strain MWYL1).